The chain runs to 116 residues: Protein lin-52 homolog (116 aa).

Phosphoserine occurs at positions 28 and 53.

This sequence belongs to the lin-52 family. As to quaternary structure, component of the DREAM complex (also named LINC complex) at least composed of E2F4, E2F5, LIN9, LIN37, LIN52, LIN54, MYBL1, MYBL2, RBL1, RBL2, RBBP4, TFDP1 and TFDP2. The complex exists in quiescent cells where it represses cell cycle-dependent genes. It dissociates in S phase when LIN9, LIN37, LIN52 and LIN54 form a subcomplex that binds to MYBL2.

The chain is Protein lin-52 homolog (LIN52) from Homo sapiens (Human).